Consider the following 175-residue polypeptide: MPQYFAIIGKKDNPVYEIEFTNAENPQGFPQDLKELNPFILHASLDIVEDLQWQINPTSQLNGNGGNGSNGGGGFLRSRAVNNTDNCYLGKVDHFYGLAITAYISYSGMKFVMIHGNSANSSVVIDDNNMRSFYQEVHELYVKTLMNPFYKITDPIRSPAFDSRVRTLARKHLSK.

Belongs to the TRAPP small subunits family. Sedlin subfamily. As to quaternary structure, part of the multisubunit TRAPP (transport protein particle) I complex composed of BET3, BET5, TRS20, TRS23, TRS31 and TRS33. Part of the multisubunit TRAPP (transport protein particle) II complex composed of BET3, BET5, TRS20, TRS23, TRS31, TRS33, TRS65, TRS85, TRS120 and TRS130. Part of the multisubunit TRAPP (transport protein particle) III complex composed of BET3, BET5, TRS20, TRS23, TRS31, TRS33 and TRS85.

It is found in the golgi apparatus. The protein resides in the cis-Golgi network. Its subcellular location is the endoplasmic reticulum. It localises to the preautophagosomal structure. Functionally, component of the TRAPP I, TRAPP II and TRAPP III complexes which act as guanine nucleotide exchange factors (GEF) for YPT1. TRAPP I plays a key role in the late stages of endoplasmic reticulum to Golgi traffic. TRAPP II plays a role in intra-Golgi transport. TRAPP III plays a role in autophagosome formation. This Saccharomyces cerevisiae (strain ATCC 204508 / S288c) (Baker's yeast) protein is Trafficking protein particle complex subunit 20 (TRS20).